A 594-amino-acid polypeptide reads, in one-letter code: DNA polymerase epsilon subunit B (594 aa).

This sequence belongs to the DNA polymerase epsilon subunit B family. In terms of assembly, heterotetramer. Consists of four subunits: pol2, dpb2, dpb3 and dpb4. Interacts with dpb3.

Its subcellular location is the nucleus. Functionally, as accessory component of the DNA polymerase epsilon (DNA polymerase II) participates in chromosomal DNA replication. This is DNA polymerase epsilon subunit B (dpb2) from Schizosaccharomyces pombe (strain 972 / ATCC 24843) (Fission yeast).